Reading from the N-terminus, the 119-residue chain is UPF0342 protein GK0640 (119 aa).

Belongs to the UPF0342 family.

The chain is UPF0342 protein GK0640 from Geobacillus kaustophilus (strain HTA426).